The chain runs to 331 residues: Putative ankyrin repeat protein RBE_0261 (331 aa).

The stretch at 94-159 (QGENVIHKCV…KAKNTLLNIV (66 aa)) is one ANK repeat.

The polypeptide is Putative ankyrin repeat protein RBE_0261 (Rickettsia bellii (strain RML369-C)).